The sequence spans 225 residues: ATP synthase F(0) complex subunit a (225 aa).

Helical transmembrane passes span 10-30 (PSLLGISLLMPALLMTTILLL), 69-89 (LILISLLILLSLTNLLGLLPY), 96-116 (QLSMNMAIALPLWLVTVLIGL), 135-155 (LLIPILILIETISLLIRPIAL), 168-188 (LLIQLISIATLNLWFMMPPLS), and 194-214 (VLILLLLLEFAVAMIQAYVFV).

This sequence belongs to the ATPase A chain family. In terms of assembly, component of the ATP synthase complex composed at least of ATP5F1A/subunit alpha, ATP5F1B/subunit beta, ATP5MC1/subunit c (homooctomer), MT-ATP6/subunit a, MT-ATP8/subunit 8, ATP5ME/subunit e, ATP5MF/subunit f, ATP5MG/subunit g, ATP5MK/subunit k, ATP5MJ/subunit j, ATP5F1C/subunit gamma, ATP5F1D/subunit delta, ATP5F1E/subunit epsilon, ATP5PF/subunit F6, ATP5PB/subunit b, ATP5PD/subunit d, ATP5PO/subunit OSCP. ATP synthase complex consists of a soluble F(1) head domain (subunits alpha(3) and beta(3)) - the catalytic core - and a membrane F(0) domain - the membrane proton channel (subunits c, a, 8, e, f, g, k and j). These two domains are linked by a central stalk (subunits gamma, delta, and epsilon) rotating inside the F1 region and a stationary peripheral stalk (subunits F6, b, d, and OSCP). Interacts with DNAJC30; interaction is direct.

The protein localises to the mitochondrion inner membrane. It catalyses the reaction H(+)(in) = H(+)(out). Functionally, subunit a, of the mitochondrial membrane ATP synthase complex (F(1)F(0) ATP synthase or Complex V) that produces ATP from ADP in the presence of a proton gradient across the membrane which is generated by electron transport complexes of the respiratory chain. ATP synthase complex consist of a soluble F(1) head domain - the catalytic core - and a membrane F(1) domain - the membrane proton channel. These two domains are linked by a central stalk rotating inside the F(1) region and a stationary peripheral stalk. During catalysis, ATP synthesis in the catalytic domain of F(1) is coupled via a rotary mechanism of the central stalk subunits to proton translocation. With the subunit c (ATP5MC1), forms the proton-conducting channel in the F(0) domain, that contains two crucial half-channels (inlet and outlet) that facilitate proton movement from the mitochondrial intermembrane space (IMS) into the matrix. Protons are taken up via the inlet half-channel and released through the outlet half-channel, following a Grotthuss mechanism. This Alligator mississippiensis (American alligator) protein is ATP synthase F(0) complex subunit a.